We begin with the raw amino-acid sequence, 113 residues long: uncharacterized protein (113 aa).

The first 38 residues, 1–38, serve as a signal peptide directing secretion; that stretch reads MVKIERKATDSAYHEFTKILTSSAQLMAFLNQSDFVKA.

This is an uncharacterized protein from Haemophilus influenzae (strain ATCC 51907 / DSM 11121 / KW20 / Rd).